We begin with the raw amino-acid sequence, 317 residues long: Ribosomal RNA small subunit methyltransferase H (317 aa).

Residues 39–41 (GGH), Asp59, Phe83, Asp104, and Gln111 each bind S-adenosyl-L-methionine.

The protein belongs to the methyltransferase superfamily. RsmH family.

The protein resides in the cytoplasm. The enzyme catalyses cytidine(1402) in 16S rRNA + S-adenosyl-L-methionine = N(4)-methylcytidine(1402) in 16S rRNA + S-adenosyl-L-homocysteine + H(+). Functionally, specifically methylates the N4 position of cytidine in position 1402 (C1402) of 16S rRNA. The polypeptide is Ribosomal RNA small subunit methyltransferase H (Paraburkholderia phymatum (strain DSM 17167 / CIP 108236 / LMG 21445 / STM815) (Burkholderia phymatum)).